The chain runs to 877 residues: Alanine--tRNA ligase (877 aa).

Zn(2+) contacts are provided by His-567, His-571, Cys-669, and His-673.

The protein belongs to the class-II aminoacyl-tRNA synthetase family. It depends on Zn(2+) as a cofactor.

Its subcellular location is the cytoplasm. The catalysed reaction is tRNA(Ala) + L-alanine + ATP = L-alanyl-tRNA(Ala) + AMP + diphosphate. Functionally, catalyzes the attachment of alanine to tRNA(Ala) in a two-step reaction: alanine is first activated by ATP to form Ala-AMP and then transferred to the acceptor end of tRNA(Ala). Also edits incorrectly charged Ser-tRNA(Ala) and Gly-tRNA(Ala) via its editing domain. The protein is Alanine--tRNA ligase of Rickettsia bellii (strain RML369-C).